A 194-amino-acid chain; its full sequence is CD-NTase-associated protein 15 (194 aa).

Residues M1 to D73 form a required for cell toxicity region. The next 2 membrane-spanning stretches (helical) occupy residues I15–V35 and I43–I63.

The protein belongs to the CBASS Cap15 membrane effector family. The beta barrel domain oligomerizes; in the presence of cyclic nucleotides (probably 3',3'-cGAMP, but the cognate CD-NTase makes at least 4 other cyclic nucleotides) higher-level oligomers are detected.

The protein resides in the cell inner membrane. In terms of biological role, effector protein of a CBASS antivirus system. CBASS (cyclic oligonucleotide-based antiphage signaling system) provides immunity against bacteriophages. The CD-NTase protein (CdnB) synthesizes cyclic nucleotides in response to infection; these serve as specific second messenger signals. The signals activate a diverse range of effectors, leading to bacterial cell death and thus abortive phage infection. Causes cell death in response to 3',3'-cGAMP upon coexpression in E.coli with V.cholerae DncV; inactivating DncV prevents cell death. Upon induction in E.coli with non-cognate DncV, the cell inner membrane shrinks and separates from the cell wall with a concomitant increase in the periplasm. Binds cyclic nucleotide second messenger 3',3'-cGAMP, probably oligomerizing, and induces cell membrane shrinkage and rupture, leading to cell death. A type I CBASS system. Its function is as follows. Protects E.coli against phage infection. When the CBASS operon (cdnB-cap15) is introduced in E.coli MG1655 there is about 100-fold protection against phage T2 and about 10-fold protection against phage T5 and T6. This is CD-NTase-associated protein 15 from Escherichia albertii.